Consider the following 382-residue polypeptide: Neuropeptide Y receptor type 2 (382 aa).

Positions 1–39 (MGPIGAEADENQTVEEMKMEPSGPGHTTPRGELAPDSEP) are disordered. Residues 1-46 (MGPIGAEADENQTVEEMKMEPSGPGHTTPRGELAPDSEPELKDSTK) are Extracellular-facing. N-linked (GlcNAc...) asparagine glycosylation is present at N11. The helical transmembrane segment at 47-67 (LIEVQIILILAYCSIILLGVV) threads the bilayer. At 68–87 (GNSLVIHVVIKFKSMRTVTN) the chain is on the cytoplasmic side. Residues 88-108 (FFIANLAVADLLVNTLCLPFT) form a helical membrane-spanning segment. At 109–125 (LTYTLMGEWKMGPVLCH) the chain is on the extracellular side. An intrachain disulfide couples C124 to C204. The chain crosses the membrane as a helical span at residues 126-146 (LVPYAQGLAVQVSTITLTVIA). The Cytoplasmic portion of the chain corresponds to 147–166 (LDRHRCIVYHLESKISKRIS). The chain crosses the membrane as a helical span at residues 167–187 (FLIIGLAWGISALLASPLAIF). At 188 to 217 (REYSLIEIIPDFEIVACTEKWPGEEKSIYG) the chain is on the extracellular side. Residues 218–238 (TVYSLSSLLILYVLPLGIISF) traverse the membrane as a helical segment. Residues 239 to 269 (SYARIWSKLKNHVSPGGVNDHYHQRRQKTTK) are Cytoplasmic-facing. A helical membrane pass occupies residues 270–290 (MLVCVVVVFAVSWLPLHAFQL). At 291–305 (AVDIDSQVLDLKEYK) the chain is on the extracellular side. A helical membrane pass occupies residues 306–326 (LIFTVFHIIAMCSTFANPLLY). The Cytoplasmic segment spans residues 327-382 (GWMNSNYRKAFLSAFRCEQRLDAIHSEVSMTSKAKKNLEATKNGGPDDSFTEATNV). C343 is lipidated: S-palmitoyl cysteine. Residues 363-382 (NLEATKNGGPDDSFTEATNV) are disordered.

Belongs to the G-protein coupled receptor 1 family.

The protein resides in the cell membrane. Receptor for neuropeptide Y and peptide YY. This Sus scrofa (Pig) protein is Neuropeptide Y receptor type 2 (NPY2R).